The sequence spans 34 residues: Photosystem II reaction center protein M (34 aa).

The helical transmembrane segment at 5–25 (ILGLMAVALFILIPTSFLLIL) threads the bilayer.

The protein belongs to the PsbM family. PSII is composed of 1 copy each of membrane proteins PsbA, PsbB, PsbC, PsbD, PsbE, PsbF, PsbH, PsbI, PsbJ, PsbK, PsbL, PsbM, PsbT, PsbX, PsbY, PsbZ, Psb30/Ycf12, at least 3 peripheral proteins of the oxygen-evolving complex and a large number of cofactors. It forms dimeric complexes.

The protein localises to the plastid. It is found in the chloroplast thylakoid membrane. One of the components of the core complex of photosystem II (PSII). PSII is a light-driven water:plastoquinone oxidoreductase that uses light energy to abstract electrons from H(2)O, generating O(2) and a proton gradient subsequently used for ATP formation. It consists of a core antenna complex that captures photons, and an electron transfer chain that converts photonic excitation into a charge separation. This subunit is found at the monomer-monomer interface. The sequence is that of Photosystem II reaction center protein M from Tupiella akineta (Green alga).